The sequence spans 823 residues: Fibroblast growth factor receptor 2 (823 aa).

The N-terminal stretch at 1–23 (MVSWDSGCLICLVVVTMAGLSLA) is a signal peptide. The Extracellular segment spans residues 24-379 (RPSFNLVVED…EFPTSPDYLE (356 aa)). The 102-residue stretch at 27–128 (FNLVVEDATL…DTLYFIVNVT (102 aa)) folds into the Ig-like C2-type 1 domain. A disulfide bridge links C65 with C110. N86, N126, and N148 each carry an N-linked (GlcNAc...) asparagine glycan. Ig-like C2-type domains follow at residues 156 to 249 (PYWT…YHLD) and 258 to 360 (PILQ…AWLT). The heparin-binding stretch occupies residues 163–180 (KMEKRLHAVPAANTVKFR). Residues C181 and C233 are joined by a disulfide bond. N-linked (GlcNAc...) asparagine glycosylation is found at N230, N243, N267, N299, N320, and N333. A disulfide bridge links C280 with C344. A helical transmembrane segment spans residues 380 to 400 (IAIYCIGVFLIACMVLTVILC). At 401-823 (RMKNTTKKPD…YQHMNGSVKT (423 aa)) the chain is on the cytoplasmic side. Phosphotyrosine; by autocatalysis is present on Y468. In terms of domain architecture, Protein kinase spans 483–772 (LTLGKPLGEG…LTLTTNEEYL (290 aa)). ATP is bound by residues 489 to 497 (LGEGCFGQV), K519, 567 to 569 (EYA), and N573. Phosphotyrosine; by autocatalysis is present on Y588. D628 (proton acceptor) is an active-site residue. Phosphotyrosine; by autocatalysis is present on residues Y658, Y659, and Y771.

The protein belongs to the protein kinase superfamily. Tyr protein kinase family. Fibroblast growth factor receptor subfamily. Monomer. Homodimer after ligand binding. Autophosphorylated. Binding of FGF family members together with heparan sulfate proteoglycan or heparin promotes receptor dimerization and autophosphorylation on tyrosine residues. Autophosphorylation occurs in trans between the two FGFR molecules present in the dimer. Post-translationally, N-glycosylated in the endoplasmic reticulum. The N-glycan chains undergo further maturation to an Endo H-resistant form in the Golgi apparatus. In terms of processing, ubiquitinated. FGFR2 is rapidly ubiquitinated after autophosphorylation, leading to internalization and degradation. Subject to degradation both in lysosomes and by the proteasome.

Its subcellular location is the cell membrane. It is found in the golgi apparatus. It localises to the cytoplasmic vesicle. The enzyme catalyses L-tyrosyl-[protein] + ATP = O-phospho-L-tyrosyl-[protein] + ADP + H(+). Its activity is regulated as follows. Present in an inactive conformation in the absence of bound ligand. Ligand binding leads to dimerization and activation by autophosphorylation on tyrosine residues. Its function is as follows. Tyrosine-protein kinase that acts as a cell-surface receptor for fibroblast growth factors and plays an essential role in the regulation of cell proliferation, differentiation, migration and apoptosis, and in the regulation of embryonic development. Required for normal embryonic patterning, limb bud development, lung morphogenesis, osteogenesis and skin development. Plays an essential role in the regulation of osteoblast differentiation, proliferation and apoptosis, and is required for normal skeleton development. Promotes cell proliferation in keratinocytes and immature osteoblasts, but promotes apoptosis in differentiated osteoblasts. Phosphorylates PLCG1, FRS2 and PAK4. Ligand binding leads to the activation of several signaling cascades. Activation of PLCG1 leads to the production of the cellular signaling molecules diacylglycerol and inositol 1,4,5-trisphosphate. Phosphorylation of FRS2 triggers recruitment of GRB2, GAB1, PIK3R1 and SOS1, and mediates activation of RAS, MAPK1/ERK2, MAPK3/ERK1 and the MAP kinase signaling pathway, as well as of the AKT1 signaling pathway. FGFR2 signaling is down-regulated by ubiquitination, internalization and degradation. Mutations that lead to constitutive kinase activation or impair normal FGFR2 maturation, internalization and degradation lead to aberrant signaling. Over-expressed FGFR2 promotes activation of STAT1. The protein is Fibroblast growth factor receptor 2 (FGFR2) of Gallus gallus (Chicken).